Reading from the N-terminus, the 843-residue chain is Respiratory burst oxidase homolog protein B (843 aa).

The span at 1–10 (MREEEMESSS) shows a compositional bias: acidic residues. Positions 1–27 (MREEEMESSSEGETNKISRCKATGSDN) are disordered. Residues 1–297 (MREEEMESSS…SYFFLENWKR (297 aa)) are Cytoplasmic-facing. 2 EF-hand-like regions span residues 114 to 122 (AVEGKLPKS) and 148 to 159 (RGTTSSSITKTE). EF-hand domains lie at 171 to 206 (SFDD…SASA) and 215 to 250 (NVDE…VPSQ). 5 residues coordinate Ca(2+): aspartate 184, asparagine 186, aspartate 188, arginine 190, and glutamate 195. A Phosphoserine modification is found at serine 268. The helical transmembrane segment at 298–318 (IWVLTLWISICITLFTWKFLQ) threads the bilayer. Residues 319 to 383 (YKRKTVFEVM…FDDNINFHKV (65 aa)) lie on the Extracellular side of the membrane. The Ferric oxidoreductase domain maps to 336–495 (KGSAETLKFN…LFVIVYVLLI (160 aa)). A helical transmembrane segment spans residues 384-404 (VAFGIAVGIGLHAISHLACDF). At 405-439 (PRLLHAKNVEFEPMKKFFGDERPENYGWFMKGTDG) the chain is on the cytoplasmic side. Residues 440–460 (WTGVTMVVLMLVAYVLAQSWF) form a helical membrane-spanning segment. Residues 461 to 482 (RRNRANLPKSLKRLTGFNAFWY) lie on the Extracellular side of the membrane. The helical transmembrane segment at 483–503 (SHHLFVIVYVLLIVHGYFVYL) threads the bilayer. Over 504 to 511 (SKEWYHKT) the chain is Cytoplasmic. A helical transmembrane segment spans residues 512–529 (TWMYLAVPVLLYAFERLI). At 530-659 (RAFRPGAKAV…PYGAPAQDYR (130 aa)) the chain is on the extracellular side. The region spanning 534 to 657 (PGAKAVKVLK…DGPYGAPAQD (124 aa)) is the FAD-binding FR-type domain. A helical transmembrane segment spans residues 660 to 680 (NYDVLLLVGLGIGATPLISII). At 681–843 (RDVLNNIKNQ…TKFEFHKENF (163 aa)) the chain is on the cytoplasmic side.

It belongs to the RBOH (TC 5.B.1.3) family. In terms of assembly, monomer and homodimer.

It is found in the membrane. Its function is as follows. Calcium-dependent NADPH oxidase that generates superoxide. This chain is Respiratory burst oxidase homolog protein B (RBOHB), found in Arabidopsis thaliana (Mouse-ear cress).